Consider the following 361-residue polypeptide: Chorismate synthase (361 aa).

Residues Arg-48 and Arg-54 each coordinate NADP(+). FMN-binding positions include 125-127 (RSS), 238-239 (NA), Gly-278, 293-297 (KPTSS), and Arg-319.

It belongs to the chorismate synthase family. In terms of assembly, homotetramer. The cofactor is FMNH2.

It catalyses the reaction 5-O-(1-carboxyvinyl)-3-phosphoshikimate = chorismate + phosphate. It participates in metabolic intermediate biosynthesis; chorismate biosynthesis; chorismate from D-erythrose 4-phosphate and phosphoenolpyruvate: step 7/7. In terms of biological role, catalyzes the anti-1,4-elimination of the C-3 phosphate and the C-6 proR hydrogen from 5-enolpyruvylshikimate-3-phosphate (EPSP) to yield chorismate, which is the branch point compound that serves as the starting substrate for the three terminal pathways of aromatic amino acid biosynthesis. This reaction introduces a second double bond into the aromatic ring system. In Escherichia coli (strain K12 / MC4100 / BW2952), this protein is Chorismate synthase.